Reading from the N-terminus, the 250-residue chain is Cell division protein ZapD (250 aa).

This sequence belongs to the ZapD family. In terms of assembly, interacts with FtsZ.

The protein localises to the cytoplasm. Its function is as follows. Cell division factor that enhances FtsZ-ring assembly. Directly interacts with FtsZ and promotes bundling of FtsZ protofilaments, with a reduction in FtsZ GTPase activity. The protein is Cell division protein ZapD of Yersinia enterocolitica serotype O:8 / biotype 1B (strain NCTC 13174 / 8081).